The sequence spans 720 residues: Engulfment and cell motility protein 2 (720 aa).

Y48 is modified (phosphotyrosine). Positions 311-485 constitute an ELMO domain; sequence AQRDIIFELR…VVREQITRAL (175 aa). S503 carries the phosphoserine modification. A PH domain is found at 553-674; that stretch reads SSFRKIGNRR…LLGKDMSSEL (122 aa). The SH3-binding motif lies at 700–707; that stretch reads PEAPPPIP. At Y717 the chain carries Phosphotyrosine.

In terms of assembly, interacts with the SH3-domain of DOCK1 via its SH3-binding site. Probably part of a complex with DOCK1 and RAC1. Probably part of a complex with DOCK1 and CRK isoform CRK-II. Interacts with ARHGEF16, DOCK4 and EPHA2; mediates activation of RAC1 by EPHA2. Interacts with ADGRB3. Interacts with AUTS2; the interaction is direct. Widely expressed, with a higher expression in skeletal muscle, kidney and placenta.

It is found in the cytoplasm. Its subcellular location is the cytosol. It localises to the membrane. Involved in cytoskeletal rearrangements required for phagocytosis of apoptotic cells and cell motility. Acts in association with DOCK1 and CRK. Was initially proposed to be required in complex with DOCK1 to activate Rac Rho small GTPases. May enhance the guanine nucleotide exchange factor (GEF) activity of DOCK1. The polypeptide is Engulfment and cell motility protein 2 (ELMO2) (Homo sapiens (Human)).